A 296-amino-acid polypeptide reads, in one-letter code: 33 kDa chaperonin (296 aa).

Intrachain disulfides connect C236-C238 and C269-C272.

It belongs to the HSP33 family. Under oxidizing conditions two disulfide bonds are formed involving the reactive cysteines. Under reducing conditions zinc is bound to the reactive cysteines and the protein is inactive.

The protein resides in the cytoplasm. Functionally, redox regulated molecular chaperone. Protects both thermally unfolding and oxidatively damaged proteins from irreversible aggregation. Plays an important role in the bacterial defense system toward oxidative stress. This chain is 33 kDa chaperonin, found in Lactobacillus acidophilus (strain ATCC 700396 / NCK56 / N2 / NCFM).